A 459-amino-acid chain; its full sequence is Antizyme inhibitor 2 (459 aa).

The necessary for polyamine uptake stimulation stretch occupies residues glutamine 117–leucine 140.

The protein belongs to the Orn/Lys/Arg decarboxylase class-II family. ODC antizyme inhibitor subfamily. In terms of assembly, monomer. Interacts with OAZ1, OAZ2 and OAZ3; this interaction disrupts the interaction between the antizyme and ODC1. Does not form a heterodimer with ODC1. Ubiquitinated, leading to its proteasomal degradation; a process that is reduced in presence of antizymes. May also be degraded through the lysosomal degradative pathway in a proteasomal-independent manner. As to expression, expressed in the medulla and chromaffin cells of the adrenal gland. Expressed in the Langerhans islets of the pancreas. Expressed in the inner part of the seminiferous tubules and in spermatozoa located in the lumen of the epididymis of the testis. Expressed in the cortex, hippocampus and cerebellum of the brain. Expressed in normal and neoplastic mast cells (MC) (at protein level). Expressed in testis, pancreas and brain. Expressed throughout the differentiation process from spermatids to spermatozoa in the inner part of the seminiferous tubules. Expressed in the kidney: expressed in the superficial (Cs) and the deep layer (Cd) of the cortex region and in the outer stripe (OS), inner stripe (IS) and the inner medulla papilla (IM) of the medulla region.

The protein resides in the nucleus. Its subcellular location is the cytoplasm. It localises to the perinuclear region. It is found in the membrane. The protein localises to the cytoplasmic vesicle. The protein resides in the endoplasmic reticulum-Golgi intermediate compartment. Its subcellular location is the golgi apparatus. It localises to the cis-Golgi network. It is found in the trans-Golgi network. The protein localises to the cytoplasmic granule. The protein resides in the cell projection. Its subcellular location is the axon. It localises to the dendrite. It is found in the perikaryon. Antizyme inhibitor (AZI) protein that positively regulates ornithine decarboxylase (ODC) activity and polyamine uptake. AZI is an enzymatically inactive ODC homolog that counteracts the negative effect of ODC antizymes (AZs) OAZ1, OAZ2 and OAZ3 on ODC activity by competing with ODC for antizyme-binding. Inhibits antizyme-dependent ODC degradation and releases ODC monomers from their inactive complex with antizymes, leading to formation of the catalytically active ODC homodimer and restoring polyamine production. Participates in the morphological integrity of the trans-Golgi network (TGN) and functions as a regulator of intracellular secretory vesicle trafficking. This chain is Antizyme inhibitor 2 (Azin2), found in Mus musculus (Mouse).